The following is a 349-amino-acid chain: L-lactate dehydrogenase (349 aa).

Residues 199–219 form a disordered region; sequence APEGSIIGADGNPTTDASTMF.

The protein belongs to the LDH2/MDH2 oxidoreductase family.

The protein localises to the cytoplasm. It carries out the reaction (S)-lactate + NAD(+) = pyruvate + NADH + H(+). It functions in the pathway fermentation; pyruvate fermentation to lactate; (S)-lactate from pyruvate: step 1/1. This chain is L-lactate dehydrogenase (ldh), found in Cupriavidus necator (strain ATCC 17699 / DSM 428 / KCTC 22496 / NCIMB 10442 / H16 / Stanier 337) (Ralstonia eutropha).